The primary structure comprises 1512 residues: MSFYKKVTRGLATPLQGSINLFSGSPNVSGDEGTDADNENPEHRTTYHSLSGRVNHDDDDEDVAKLEDIVGFFTGLLNTTTVCAGLGSLNNLKKHYLDEFIKKSALNPLRPQNYGPETSSKLNNNSIEELLNNGDTSLEKVRKMSLYDFDEHTSDSEEEDSADKEEESIAENLKPGKSGKARNHPRDSRTTATLITTQITRTKTATTATPTPTPTSSVDTDVTDVTEPIGKVTTKIPEEQLQGLNPLQKSVVKNLDPHHVREGVLIKVKNSETPLKNDRQELLEKIQLRLKIADKLQRVFDLSDEDTFCGNYSAWLIKDVLLQGHVYLTKDALLYFAFLPKRFSLENSSEVLDEDNSSSIVYSGNLGLKSAKYGEVVLNTVLQHRYWAVLRAETLSIYSSSTNLYFPVLVIDIKKCLYTEIIDKEKLNREAISPVNRGTYSPNGGLSGTATPRASTLENTASELNSMLSGDSYSPTEDNVETTASTVWFKLVTKKKTYKFSCDSSFSARQWCNNITKLIFQHNNANSNGEVLIKIPISKIAEYNKRALFSEEEEEDRTLDVTMNDIPLNVTIKYLGDNDNERKRDKLKRKYKGEEPTIEEVHFLFPKSGVEFFETFDKLVNPVVSDNDNQSSKSSITSTNFSEKAISTLSKSPNHLVQTVLDFNKPVDDDISAFKKFGTTITSPTRIFKATITSPEMTSIDETSLRDSFDSDRLHLPRDMSERALKNLEVSFVTSLKKLEDASKRYEKPHMEHSQTNLASILSDPSEVKKESKTAISKSIKALYSVGTHWSATPNHYFELGKYYVNKVQDRDSSQRNFQSHFSTNSKLLASYYGHLLRTVPVYGKIYVSETDVCFRSLLPGVSTKMVLPMTDIEEVRASRGSRLTYHGLRLIVRGSEELDLEFGSSKSRDDFQKVVLSVLERLHSKEGFRPEPYQWGSNFEVELYKTRMEYSDSENREIQQYDNSIDIKFAEKKIEMARVRMFEDRLMAASGLDVPIILEDSPFFKTELRPSTSYNITLLTIGSRGDVQPYIALGKGLVKEGHNVTIATHAEFGDWIKTFGLGFKEIAGDPAELMSFMVTHNSMSVGFLKNAQQKFRSWISKLLTTSWEACQGSDILIESPSAMSGIHIAEALGIPYFRAFTMPWTRTRAYPHAFFVPEQKKGGSYNYLTHVLFENIFWKGISGQVNKWRVEELDLPKTNLYRLQQTRVPFLYNVSPAILPPSVDFPDWIKVTGYWFLDEGSGDYKPPEELVQFMKKASRDKKKIVYIGFGSIVVKDAKSLTKAVVSAVRRADVRCILNKGWSDRLDNKDKNEIEIELPPEIYNSGTIPHDWLFPRIDAAVHHGGSGTTGATMRAGIPTIIKPFFGDQFFYATRIEDLGAGIALKKLTAKTLGDALVKATHDLKIIDKAKRVSQQIKHEHGVLSAIESIYSELEYSRNLILIKDIHNQNYKRHHPVPSGVQTPAYDTDSDDYDDDEDDDESDKDDEEEEEENSYDGYDGNGVNNSPSQNSSN.

2 disordered regions span residues 22 to 50 (FSGSPNVSGDEGTDADNENPEHRTTYHSL) and 150 to 222 (DEHT…DTDV). The span at 156–169 (SEEEDSADKEEESI) shows a compositional bias: acidic residues. A compositionally biased stretch (low complexity) spans 190 to 222 (TTATLITTQITRTKTATTATPTPTPTSSVDTDV). The GRAM 1 domain occupies 296 to 331 (LQRVFDLSDEDTFCGNYSAWLIKDVLLQGHVYLTKD). Residues 359–520 (SIVYSGNLGL…WCNNITKLIF (162 aa)) form the PH domain. In terms of domain architecture, GRAM 2 spans 816 to 880 (RNFQSHFSTN…TDIEEVRASR (65 aa)). Residues Ser-1024, Arg-1025, Asp-1027, Asn-1299, Ile-1328, His-1330, His-1343, Ser-1346, Gly-1347, Thr-1348, Asp-1367, and Gln-1368 each coordinate UDP-alpha-D-glucose. Positions 1450-1512 (YKRHHPVPSG…NNSPSQNSSN (63 aa)) are disordered. Residues 1467–1493 (TDSDDYDDDEDDDESDKDDEEEEEENS) show a composition bias toward acidic residues. A compositionally biased stretch (polar residues) spans 1501-1512 (GVNNSPSQNSSN).

It belongs to the glycosyltransferase 28 family.

The protein resides in the cytoplasm. Its subcellular location is the membrane. The enzyme catalyses a sterol + UDP-alpha-D-glucose = a sterol 3-beta-D-glucoside + UDP + H(+). It carries out the reaction ergosterol + UDP-alpha-D-glucose = ergosteryl 3-beta-D-glucoside + UDP + H(+). Sterol glycosyltransferase responsible for the glycosylation of ergosterol to form ergosterol-glucoside. This Candida albicans (strain SC5314 / ATCC MYA-2876) (Yeast) protein is Sterol 3-beta-glucosyltransferase.